A 906-amino-acid chain; its full sequence is Valine--tRNA ligase (906 aa).

The 'HIGH' region motif lies at 43–53; sequence PNVTGSLHIGH. Positions 548-552 match the 'KMSKS' region motif; the sequence is KMSKS. Residue lysine 551 coordinates ATP. Positions 842–905 form a coiled coil; it reads EKARLTKDIA…EAALSRLASV (64 aa).

This sequence belongs to the class-I aminoacyl-tRNA synthetase family. ValS type 1 subfamily. Monomer.

It is found in the cytoplasm. The catalysed reaction is tRNA(Val) + L-valine + ATP = L-valyl-tRNA(Val) + AMP + diphosphate. In terms of biological role, catalyzes the attachment of valine to tRNA(Val). As ValRS can inadvertently accommodate and process structurally similar amino acids such as threonine, to avoid such errors, it has a 'posttransfer' editing activity that hydrolyzes mischarged Thr-tRNA(Val) in a tRNA-dependent manner. The sequence is that of Valine--tRNA ligase from Caulobacter vibrioides (strain ATCC 19089 / CIP 103742 / CB 15) (Caulobacter crescentus).